Consider the following 234-residue polypeptide: uncharacterized protein (234 aa).

Position 10–34 (10–34 (VVTGASSGIGASIAETLANQGVKVV)) interacts with NADP(+). S143 is a substrate binding site. Y156 functions as the Proton acceptor in the catalytic mechanism.

The protein belongs to the short-chain dehydrogenases/reductases (SDR) family.

This is an uncharacterized protein from Staphylococcus saprophyticus subsp. saprophyticus (strain ATCC 15305 / DSM 20229 / NCIMB 8711 / NCTC 7292 / S-41).